The chain runs to 76 residues: MTDVETTYADFIASGRTGRRNAIHDILVSSASGNSNELALKLAGLDINKTEGEDDGQRSSTEQSGEAQGEAAKSES.

Thr-2 carries the post-translational modification N-acetylthreonine. Residues 49-76 (KTEGEDDGQRSSTEQSGEAQGEAAKSES) form a disordered region.

Belongs to the PKI family. In terms of tissue distribution, present at high levels in skeletal muscle and brain but is present at lower levels in heart, testis and liver.

Its function is as follows. Extremely potent competitive inhibitor of cAMP-dependent protein kinase activity, this protein interacts with the catalytic subunit of the enzyme after the cAMP-induced dissociation of its regulatory chains. The chain is cAMP-dependent protein kinase inhibitor alpha (Pkia) from Mus musculus (Mouse).